Consider the following 731-residue polypeptide: Ribonuclease R (731 aa).

Residues 260 to 589 (RTDLRHFPFF…LHRVIKYLLF (330 aa)) form the RNB domain. Positions 647–728 (GCILNGVISN…NEKKIELSLY (82 aa)) constitute an S1 motif domain.

This sequence belongs to the RNR ribonuclease family. RNase R subfamily. As to quaternary structure, monomer.

The protein localises to the cytoplasm. It catalyses the reaction Exonucleolytic cleavage in the 3'- to 5'-direction to yield nucleoside 5'-phosphates.. Functionally, 3'-5' exoribonuclease that releases 5'-nucleoside monophosphates and is involved in maturation of structured RNAs. In Buchnera aphidicola subsp. Acyrthosiphon pisum (strain APS) (Acyrthosiphon pisum symbiotic bacterium), this protein is Ribonuclease R.